The primary structure comprises 227 residues: 4-nitrobenzoate reductase (227 aa).

15–19 (RRAVR) is a binding site for FMN. Residues Ser45, Tyr102, and Ile107 each coordinate NAD(+). Arg213 provides a ligand contact to FMN.

This sequence belongs to the nitroreductase family. The cofactor is FMN.

The catalysed reaction is 4-nitrobenzoate + 2 NADH + 2 H(+) = 4-hydroxylaminobenzoate + 2 NAD(+) + H2O. Functionally, nitroreductase involved in the degradation of nitroaromatic compounds. Catalyzes the conversion of 4-nitrobenzoate to 4-hydroxylaminobenzoate. Required for the catabolism of 4-nitrotoluene. This is 4-nitrobenzoate reductase from Pseudomonas putida (Arthrobacter siderocapsulatus).